The sequence spans 386 residues: Acetate kinase (386 aa).

A Mg(2+)-binding site is contributed by Asn-7. Position 14 (Lys-14) interacts with ATP. Arg-78 is a substrate binding site. Asp-135 functions as the Proton donor/acceptor in the catalytic mechanism. Residues 195 to 199 (HLGNG), 268 to 270 (DMR), and 316 to 320 (GIGEN) contribute to the ATP site. Glu-370 provides a ligand contact to Mg(2+).

Belongs to the acetokinase family. In terms of assembly, homodimer. Mg(2+) serves as cofactor. The cofactor is Mn(2+).

Its subcellular location is the cytoplasm. The enzyme catalyses acetate + ATP = acetyl phosphate + ADP. The protein operates within metabolic intermediate biosynthesis; acetyl-CoA biosynthesis; acetyl-CoA from acetate: step 1/2. Functionally, catalyzes the formation of acetyl phosphate from acetate and ATP. Can also catalyze the reverse reaction. The protein is Acetate kinase of Arthrobacter sp. (strain FB24).